The chain runs to 112 residues: Large ribosomal subunit protein eL33y (112 aa).

The protein belongs to the eukaryotic ribosomal protein eL33 family.

In Arabidopsis thaliana (Mouse-ear cress), this protein is Large ribosomal subunit protein eL33y (RPL35AC).